The primary structure comprises 255 residues: Acetylglutamate kinase (255 aa).

Residues 40–41, Arg-62, and Asn-153 contribute to the substrate site; that span reads GG.

The protein belongs to the acetylglutamate kinase family. ArgB subfamily.

The protein localises to the cytoplasm. The catalysed reaction is N-acetyl-L-glutamate + ATP = N-acetyl-L-glutamyl 5-phosphate + ADP. It functions in the pathway amino-acid biosynthesis; L-arginine biosynthesis; N(2)-acetyl-L-ornithine from L-glutamate: step 2/4. In terms of biological role, catalyzes the ATP-dependent phosphorylation of N-acetyl-L-glutamate. The polypeptide is Acetylglutamate kinase (Bacillus cereus (strain ATCC 14579 / DSM 31 / CCUG 7414 / JCM 2152 / NBRC 15305 / NCIMB 9373 / NCTC 2599 / NRRL B-3711)).